The chain runs to 321 residues: tRNA U34 carboxymethyltransferase (321 aa).

Carboxy-S-adenosyl-L-methionine contacts are provided by residues K90, W104, K109, G129, 151–153 (DPT), 180–181 (IE), M195, Y199, and R314.

This sequence belongs to the class I-like SAM-binding methyltransferase superfamily. CmoB family. As to quaternary structure, homotetramer.

The catalysed reaction is carboxy-S-adenosyl-L-methionine + 5-hydroxyuridine(34) in tRNA = 5-carboxymethoxyuridine(34) in tRNA + S-adenosyl-L-homocysteine + H(+). In terms of biological role, catalyzes carboxymethyl transfer from carboxy-S-adenosyl-L-methionine (Cx-SAM) to 5-hydroxyuridine (ho5U) to form 5-carboxymethoxyuridine (cmo5U) at position 34 in tRNAs. The chain is tRNA U34 carboxymethyltransferase from Haemophilus influenzae (strain 86-028NP).